Reading from the N-terminus, the 608-residue chain is Leucine aminopeptidase 2 (608 aa).

Substrate is bound by residues 134 to 136 and 269 to 274; these read QCQ and PYGGME. Histidine 298 contacts Zn(2+). The Proton acceptor role is filled by glutamate 299. Histidine 302 and glutamate 321 together coordinate Zn(2+). The active-site Proton donor is tyrosine 386.

Belongs to the peptidase M1 family. Zn(2+) serves as cofactor.

It localises to the cytoplasm. The protein localises to the nucleus. The catalysed reaction is an epoxide + H2O = an ethanediol. Aminopeptidase that preferentially cleaves di- and tripeptides. Also has low epoxide hydrolase activity (in vitro). Can hydrolyze the epoxide leukotriene LTA(4) but it forms preferentially 5,6-dihydroxy-7,9,11,14-eicosatetraenoic acid rather than the cytokine leukotriene B(4) as the product compared to the homologous mammalian enzyme (in vitro). The polypeptide is Leucine aminopeptidase 2 (Sclerotinia sclerotiorum (strain ATCC 18683 / 1980 / Ss-1) (White mold)).